The sequence spans 190 residues: UPF0200 protein TSIB_0920 (190 aa).

7 to 14 is an ATP binding site; it reads GMPGSGKG.

The protein belongs to the UPF0200 family.

The polypeptide is UPF0200 protein TSIB_0920 (Thermococcus sibiricus (strain DSM 12597 / MM 739)).